Consider the following 107-residue polypeptide: MASPAPGAGFQNKNRVAILAELDKEKRRLIQNSSMNNPGASIPLSRPALNKDFRDHAEQQHIAAQQKAALQHAHAHSSGFFITQDSSFGNLILPVLPRLDPPPPAES.

This sequence belongs to the SOSS-C family. In terms of assembly, belongs to the multiprotein complex Integrator. Component of the SOSS complex, composed of soss-b (soss-b1/nabp2 or soss-b2/nabp1), soss-a/ints3 and soss-c/inip.

It is found in the nucleus. In terms of biological role, component of the SOSS complex, a multiprotein complex that functions downstream of the MRN complex to promote DNA repair and G2/M checkpoint. The SOSS complex associates with single-stranded DNA at DNA lesions and influences diverse endpoints in the cellular DNA damage response including cell-cycle checkpoint activation, recombinational repair and maintenance of genomic stability. Required for efficient homologous recombination-dependent repair of double-strand breaks (DSBs). This Salmo salar (Atlantic salmon) protein is SOSS complex subunit C (inip).